The following is a 212-amino-acid chain: MKLDVINLDGGKAGSVDLDDAIFGIADIRGDILQRVVTWQLAKRRSGNHKIQVRNEVSRTGKKMYKQKGTGSARHGSRRAAQFVGGAKAHGPVVRSHAFDLPKKIRAMALRHALSSKAKSGSIIVLDTAVLTDPKTAALRANFDKIGLKNALVIAGPEVDGNFKLAARNIPNIDVLPNAGLNVYDVLRRHTLVLTKDAVEAISARFAEKEAA.

Belongs to the universal ribosomal protein uL4 family. In terms of assembly, part of the 50S ribosomal subunit.

One of the primary rRNA binding proteins, this protein initially binds near the 5'-end of the 23S rRNA. It is important during the early stages of 50S assembly. It makes multiple contacts with different domains of the 23S rRNA in the assembled 50S subunit and ribosome. In terms of biological role, forms part of the polypeptide exit tunnel. This Caulobacter sp. (strain K31) protein is Large ribosomal subunit protein uL4.